A 307-amino-acid chain; its full sequence is Probable inactive peptidyl-prolyl cis-trans isomerase-like 6 (307 aa).

In terms of domain architecture, PPIase cyclophilin-type spans phenylalanine 141–glutamine 304.

Belongs to the cyclophilin-type PPIase family.

Functionally, probable inactive PPIase with no peptidyl-prolyl cis-trans isomerase activity. This Bos taurus (Bovine) protein is Probable inactive peptidyl-prolyl cis-trans isomerase-like 6.